Consider the following 93-residue polypeptide: uncharacterized protein (93 aa).

Residues Lys73 to Asn93 are disordered. Basic and acidic residues predominate over residues Asp83–Asn93.

This is an uncharacterized protein from Rhodobacter capsulatus (Rhodopseudomonas capsulata).